A 489-amino-acid polypeptide reads, in one-letter code: Type II restriction enzyme Sau3AI (489 aa).

Mg(2+) serves as cofactor.

The catalysed reaction is Endonucleolytic cleavage of DNA to give specific double-stranded fragments with terminal 5'-phosphates.. An E and P subtype restriction enzyme that recognizes the double-stranded sequence 5'-GATC-3' and cleaves before G-1. The protein is Type II restriction enzyme Sau3AI (sau3AIR) of Staphylococcus aureus.